The primary structure comprises 271 residues: Mannosyl-3-phosphoglycerate phosphatase (271 aa).

D13 (nucleophile) is an active-site residue. The Mg(2+) site is built by D13, D15, and D214.

The protein belongs to the HAD-like hydrolase superfamily. MPGP family. The cofactor is Mg(2+).

It localises to the cytoplasm. The enzyme catalyses 2-O-(alpha-D-mannosyl)-3-phosphoglycerate + H2O = (2R)-2-O-(alpha-D-mannosyl)-glycerate + phosphate. The protein is Mannosyl-3-phosphoglycerate phosphatase of Escherichia coli O17:K52:H18 (strain UMN026 / ExPEC).